A 769-amino-acid chain; its full sequence is MRLLRRWAFAALLLSLLPTPGLGTQGPAGALRWGGLPQLGGPGAPEVTEPSRLVRESSGGEVRKQQLDTRVRQEPPGGPPVHLAQVSFVIPAFNSNFTLDLELNHHLLSSQYVERHFSREGTTQHSTGAGDHCYYQGKLRGNPHSFAALSTCQGLHGVFSDGNLTYIVEPQEVAGPWGAPQGPLPHLIYRTPLLPDPLGCREPGCLFAVPAQSAPPNRPRLRRKRQVRRGHPTVHSETKYVELIVINDHQLFEQMRQSVVLTSNFAKSVVNLADVIYKEQLNTRIVLVAMETWADGDKIQVQDDLLETLARLMVYRREGLPEPSDATHLFSGRTFQSTSSGAAYVGGICSLSHGGGVNEYGNMGAMAVTLAQTLGQNLGMMWNKHRSSAGDCKCPDIWLGCIMEDTGFYLPRKFSRCSIDEYNQFLQEGGGSCLFNKPLKLLDPPECGNGFVEAGEECDCGSVQECSRAGGNCCKKCTLTHDAMCSDGLCCRRCKYEPRGVSCREAVNECDIAETCTGDSSQCPPNLHKLDGYYCDHEQGRCYGGRCKTRDRQCQVLWGHAAADRFCYEKLNVEGTERGSCGRKGSGWVQCSKQDVLCGFLLCVNISGAPRLGDLVGDISSVTFYHQGKELDCRGGHVQLADGSDLSYVEDGTACGPNMLCLDHRCLPASAFNFSTCPGSGERRICSHHGVCSNEGKCICQPDWTGKDCSIHNPLPTSPPTGETERYKGPSGTNIIIGSIAGAVLVAAIVLGGTGWGFKNIRRGRSGGA.

Positions Met-1–Gly-23 are cleaved as a signal peptide. Positions Thr-24–Arg-225 are excised as a propeptide. Positions Gly-40–Gly-78 are disordered. Positions Glu-61–Gln-73 are enriched in basic and acidic residues. N-linked (GlcNAc...) asparagine glycosylation is found at Asn-96 and Asn-163. Residues Gln-226–Asn-734 are Extracellular-facing. The region spanning Lys-239–Pro-438 is the Peptidase M12B domain. Positions Gly-332–Ala-769 are required for localization to cerebellar cortex basket cell terminals. Also required for localization of KCNA1, KCNA2, DLG4 and ADAM22 to cerebellar cortex basket cell terminal perisomatic axons and pinceaux. 4 cysteine pairs are disulfide-bonded: Cys-349-Cys-433, Cys-392-Cys-417, Cys-394-Cys-401, and Cys-503-Cys-523. One can recognise a Disintegrin domain in the interval Pro-444–Asp-531. Residues Asn-605 and Asn-673 are each glycosylated (N-linked (GlcNAc...) asparagine). 3 cysteine pairs are disulfide-bonded: Cys-677–Cys-692, Cys-686–Cys-698, and Cys-700–Cys-709. Positions Cys-677–Cys-709 constitute an EGF-like domain. A helical transmembrane segment spans residues Ile-735–Gly-755. The Cytoplasmic portion of the chain corresponds to Trp-756–Ala-769.

As to quaternary structure, interacts with LGI1 and LGI4. Interacts with KCNA1/KV1.1, KCNA2/KV1.2, DLG4/PSD-95 and ADAM22. In terms of processing, the precursor is cleaved by a furin endopeptidase. In terms of tissue distribution, expressed predominantly in brain. Slightly detected or not at all in other tissues.

Its subcellular location is the presynaptic cell membrane. It is found in the perikaryon. The protein resides in the cell projection. It localises to the axon. Functionally, probable ligand for integrin in the brain. This is a non catalytic metalloprotease-like protein. Required for localization of the potassium channel subunit proteins KCNA1/KV1.1 and KCNA2/KV1.2 at cerebellar cortex basket cell distal terminals, is thereby involved in ephaptic inhibitory synchronization of Purkinje cell firing and response to stress. Plays a role in spatial learning and motor coordination. Involved in the nociceptive pain response to chemical-derived stimulation. This Homo sapiens (Human) protein is Disintegrin and metalloproteinase domain-containing protein 11 (ADAM11).